The following is a 347-amino-acid chain: Haptoglobin (347 aa).

The first 18 residues, 1 to 18, serve as a signal peptide directing secretion; it reads MRALGAVVTLLLWGQLFA. In terms of domain architecture, Sushi spans 31–88; sequence DSCPKPPEIANGYVEHLVRYRCRQFYRLRAEGDGVYTLNDEKQWMNTVAGEKLPECEA. 4 disulfides stabilise this stretch: C52-C86, C90-C207, C250-C281, and C292-C322. The 243-residue stretch at 103–345 folds into the Peptidase S1 domain; it reads IIGGSMDAKG…LKDWVQETMA (243 aa). Residues N148, N182, and N264 are each glycosylated (N-linked (GlcNAc...) asparagine). The tract at residues 259–264 is interaction with CD163; the sequence is VPEKKN.

This sequence belongs to the peptidase S1 family. Tetramer of two alpha and two beta chains; disulfide-linked. The hemoglobin/haptoglobin complex is composed of a haptoglobin dimer bound to two hemoglobin alpha-beta dimers. Interacts with CD163. Interacts with ERGIC3. In terms of tissue distribution, expressed by the liver and secreted in plasma.

It localises to the secreted. Functionally, as a result of hemolysis, hemoglobin is found to accumulate in the kidney and is secreted in the urine. Haptoglobin captures, and combines with free plasma hemoglobin to allow hepatic recycling of heme iron and to prevent kidney damage. Haptoglobin also acts as an antioxidant, has antibacterial activity and plays a role in modulating many aspects of the acute phase response. Hemoglobin/haptoglobin complexes are rapidly cleared by the macrophage CD163 scavenger receptor expressed on the surface of liver Kupfer cells through an endocytic lysosomal degradation pathway. This Mus caroli (Ryukyu mouse) protein is Haptoglobin (Hp).